Reading from the N-terminus, the 243-residue chain is UPF0758 protein AM1_4368 (243 aa).

In terms of domain architecture, MPN spans 113-235 (VIDDPAVAAA…FTSLRQTTSL (123 aa)). 3 residues coordinate Zn(2+): histidine 184, histidine 186, and aspartate 197. Positions 184-197 (HNHPSGQTDPSPED) match the JAMM motif motif.

Belongs to the UPF0758 family.

This chain is UPF0758 protein AM1_4368, found in Acaryochloris marina (strain MBIC 11017).